The primary structure comprises 402 residues: MDTRAFKRSLHSSENYHRKGFGHGEEVNQQLQGEYQSSLIQQIRANGYRWQQGDVTIRLAEAFGFCWGVERAVALAYETRTHFPTERIWITNEIIHNPSVNERLRQMAVEFIPVVNGVKDFSGVRPGDVVILPAFGASVQEMQLLNERGCTIVDTTCPWVSKVWHSVEKHKKVSFTSIIHGKYNHEETIATSSFAGTYLIVLNLEEARYVCDYILHGGDRAAFMAKFAKACSPGFDPDRDLVRVGIANQTTMLKGETEQIGKLFERTMIQKYGPDRLNEHFMSFNTICDATQERQDAMLSLVKEPLDLMVVIGGYNSSNTTHLQEIAIEHGIPSYHIDSADRIGPGNRIEHKPLHQNPTVAENWLPDRPITIGITSGASTPDKVVEEVLNKIFALRSVATVS.

C66 lines the [4Fe-4S] cluster pocket. Residue H96 participates in (2E)-4-hydroxy-3-methylbut-2-enyl diphosphate binding. H96 lines the dimethylallyl diphosphate pocket. Residue H96 coordinates isopentenyl diphosphate. C157 contributes to the [4Fe-4S] cluster binding site. H185 serves as a coordination point for (2E)-4-hydroxy-3-methylbut-2-enyl diphosphate. H185 provides a ligand contact to dimethylallyl diphosphate. H185 is a binding site for isopentenyl diphosphate. E187 acts as the Proton donor in catalysis. T250 is a binding site for (2E)-4-hydroxy-3-methylbut-2-enyl diphosphate. Position 288 (C288) interacts with [4Fe-4S] cluster. 4 residues coordinate (2E)-4-hydroxy-3-methylbut-2-enyl diphosphate: S317, S318, N319, and S379. Dimethylallyl diphosphate-binding residues include S317, S318, N319, and S379. Isopentenyl diphosphate is bound by residues S317, S318, N319, and S379.

The protein belongs to the IspH family. [4Fe-4S] cluster serves as cofactor.

It carries out the reaction isopentenyl diphosphate + 2 oxidized [2Fe-2S]-[ferredoxin] + H2O = (2E)-4-hydroxy-3-methylbut-2-enyl diphosphate + 2 reduced [2Fe-2S]-[ferredoxin] + 2 H(+). The enzyme catalyses dimethylallyl diphosphate + 2 oxidized [2Fe-2S]-[ferredoxin] + H2O = (2E)-4-hydroxy-3-methylbut-2-enyl diphosphate + 2 reduced [2Fe-2S]-[ferredoxin] + 2 H(+). Its pathway is isoprenoid biosynthesis; dimethylallyl diphosphate biosynthesis; dimethylallyl diphosphate from (2E)-4-hydroxy-3-methylbutenyl diphosphate: step 1/1. It participates in isoprenoid biosynthesis; isopentenyl diphosphate biosynthesis via DXP pathway; isopentenyl diphosphate from 1-deoxy-D-xylulose 5-phosphate: step 6/6. Its function is as follows. Catalyzes the conversion of 1-hydroxy-2-methyl-2-(E)-butenyl 4-diphosphate (HMBPP) into a mixture of isopentenyl diphosphate (IPP) and dimethylallyl diphosphate (DMAPP). Acts in the terminal step of the DOXP/MEP pathway for isoprenoid precursor biosynthesis. This Thermosynechococcus vestitus (strain NIES-2133 / IAM M-273 / BP-1) protein is 4-hydroxy-3-methylbut-2-enyl diphosphate reductase.